The primary structure comprises 152 residues: MFRGATLVNLDSKGRLAVPTRYREMLNEGSQGQMVCTIDLHQPCLLLYPLPEWEIIEQKLSRLSSMNPAERRVQRLLLGHASECQMDNAGRILLANTLRQQASLSKQVMLVGQFNKFELWDEQTWYQQVREDIDEERSSKQPLSERLQDLSL.

2 consecutive SpoVT-AbrB domains span residues 5–52 (ATLV…PLPE) and 81–124 (ASEC…DEQT).

The protein belongs to the MraZ family. In terms of assembly, forms oligomers.

It localises to the cytoplasm. The protein localises to the nucleoid. Negatively regulates its own expression and that of the subsequent genes in the proximal part of the division and cell wall (dcw) gene cluster. Acts by binding directly to DNA. May also regulate the expression of genes outside the dcw cluster. In Erwinia tasmaniensis (strain DSM 17950 / CFBP 7177 / CIP 109463 / NCPPB 4357 / Et1/99), this protein is Transcriptional regulator MraZ.